We begin with the raw amino-acid sequence, 197 residues long: Nucleoside triphosphate pyrophosphatase (197 aa).

The active-site Proton acceptor is aspartate 72.

Belongs to the Maf family. It depends on a divalent metal cation as a cofactor.

Its subcellular location is the cytoplasm. It carries out the reaction a ribonucleoside 5'-triphosphate + H2O = a ribonucleoside 5'-phosphate + diphosphate + H(+). The enzyme catalyses a 2'-deoxyribonucleoside 5'-triphosphate + H2O = a 2'-deoxyribonucleoside 5'-phosphate + diphosphate + H(+). Functionally, nucleoside triphosphate pyrophosphatase. May have a dual role in cell division arrest and in preventing the incorporation of modified nucleotides into cellular nucleic acids. This is Nucleoside triphosphate pyrophosphatase from Corynebacterium glutamicum (strain ATCC 13032 / DSM 20300 / JCM 1318 / BCRC 11384 / CCUG 27702 / LMG 3730 / NBRC 12168 / NCIMB 10025 / NRRL B-2784 / 534).